We begin with the raw amino-acid sequence, 149 residues long: Large ribosomal subunit protein bL9 (149 aa).

Belongs to the bacterial ribosomal protein bL9 family.

Binds to the 23S rRNA. The polypeptide is Large ribosomal subunit protein bL9 (rplI) (Geobacillus stearothermophilus (Bacillus stearothermophilus)).